Here is a 96-residue protein sequence, read N- to C-terminus: Envelope glycoprotein N (96 aa).

The N-terminal stretch at 1 to 21 is a signal peptide; sequence MPRSPLIVAVVAAALFAIVRG. Residues 22–54 lie on the Virion surface side of the membrane; that stretch reads RDPLLDAMRREGAMDFWSAGCYARGVPLSEPPQ. The chain crosses the membrane as a helical span at residues 55–75; the sequence is ALVVFYVALTAVMVAVALYAY. Over 76 to 96 the chain is Intravirion; that stretch reads GLCFRLMGASGPNKKESRGRG.

Belongs to the herpesviridae glycoprotein N family. Interacts (via N-terminus) with gM (via N-terminus). The gM-gN heterodimer forms the gCII complex.

Its subcellular location is the virion membrane. It localises to the host membrane. The protein localises to the host Golgi apparatus. The protein resides in the host trans-Golgi network. Functionally, envelope glycoprotein necessary for proper maturation of gM and modulation of its membrane fusion activity. Also plays a critical role in virion morphogenesis. This Bos taurus (Bovine) protein is Envelope glycoprotein N.